Consider the following 428-residue polypeptide: Serine--tRNA ligase (428 aa).

Thr-235 to Glu-237 lines the L-serine pocket. Arg-266 to Glu-268 provides a ligand contact to ATP. An L-serine-binding site is contributed by Glu-289. ATP is bound at residue Glu-353–Ser-356. Ser-389 serves as a coordination point for L-serine.

It belongs to the class-II aminoacyl-tRNA synthetase family. Type-1 seryl-tRNA synthetase subfamily. As to quaternary structure, homodimer. The tRNA molecule binds across the dimer.

Its subcellular location is the cytoplasm. It carries out the reaction tRNA(Ser) + L-serine + ATP = L-seryl-tRNA(Ser) + AMP + diphosphate + H(+). The catalysed reaction is tRNA(Sec) + L-serine + ATP = L-seryl-tRNA(Sec) + AMP + diphosphate + H(+). It functions in the pathway aminoacyl-tRNA biosynthesis; selenocysteinyl-tRNA(Sec) biosynthesis; L-seryl-tRNA(Sec) from L-serine and tRNA(Sec): step 1/1. Functionally, catalyzes the attachment of serine to tRNA(Ser). Is also able to aminoacylate tRNA(Sec) with serine, to form the misacylated tRNA L-seryl-tRNA(Sec), which will be further converted into selenocysteinyl-tRNA(Sec). This chain is Serine--tRNA ligase, found in Shewanella pealeana (strain ATCC 700345 / ANG-SQ1).